We begin with the raw amino-acid sequence, 168 residues long: Peptide deformylase 2 (168 aa).

Fe cation is bound by residues C91 and H133. Residue E134 is part of the active site. Fe cation is bound at residue H137.

Belongs to the polypeptide deformylase family. Requires Fe(2+) as cofactor.

The catalysed reaction is N-terminal N-formyl-L-methionyl-[peptide] + H2O = N-terminal L-methionyl-[peptide] + formate. Removes the formyl group from the N-terminal Met of newly synthesized proteins. Requires at least a dipeptide for an efficient rate of reaction. N-terminal L-methionine is a prerequisite for activity but the enzyme has broad specificity at other positions. The sequence is that of Peptide deformylase 2 from Vibrio vulnificus (strain CMCP6).